Consider the following 256-residue polypeptide: Fumarate reductase iron-sulfur subunit (256 aa).

Positions 7–97 (MNVEVLRYNP…HMRIEPLANF (91 aa)) constitute a 2Fe-2S ferredoxin-type domain. Residue Tyr-14 participates in a menaquinone binding. Positions 58, 63, 66, and 78 each coordinate [2Fe-2S] cluster. The 4Fe-4S ferredoxin-type domain maps to 151–180 (LEKYRQFSMCINCGLCYAACPQFGLNPEFL). [4Fe-4S] cluster-binding residues include Cys-160, Cys-163, and Cys-166. The [3Fe-4S] cluster site is built by Cys-170, Cys-216, and Cys-222. Cys-226 lines the [4Fe-4S] cluster pocket. 237–240 (NQGK) contacts a menaquinone.

This sequence belongs to the succinate dehydrogenase/fumarate reductase iron-sulfur protein family. In terms of assembly, fumarate dehydrogenase forms part of an enzyme complex containing four subunits: a flavoprotein, an iron-sulfur, and two hydrophobic anchor proteins. [2Fe-2S] cluster serves as cofactor. It depends on [3Fe-4S] cluster as a cofactor. [4Fe-4S] cluster is required as a cofactor.

Its subcellular location is the cell inner membrane. It catalyses the reaction a quinone + succinate = fumarate + a quinol. It carries out the reaction a menaquinone + succinate = a menaquinol + fumarate. This Haemophilus influenzae (strain ATCC 51907 / DSM 11121 / KW20 / Rd) protein is Fumarate reductase iron-sulfur subunit (frdB).